The chain runs to 812 residues: Leucine-rich repeat-containing protein 41 (812 aa).

Positions 45–54 (ALFELCGRAV) are interaction with Elongin BC complex. Ser155, Ser276, and Ser326 each carry phosphoserine. Positions 267–408 (GEASRGRAPS…GARTRQGPGA (142 aa)) are disordered. Residue Thr327 is modified to Phosphothreonine. Positions 354–381 (TKRSPSAPAATSSASSSTSSYKRAPASS) are enriched in low complexity. A phosphoserine mark is found at Ser357 and Ser373. A compositionally biased stretch (basic residues) spans 387–401 (PLKRFKRAAGKKGAR). LRR repeat units follow at residues 487–507 (WVSL…IFRL), 518–530 (AGCR…LSDL), 531–555 (FSPL…VLSI), 613–635 (SGSL…FGLV), 636–659 (LQTL…LADC), 701–728 (NSTL…VFSE), and 731–752 (SSSL…LLEF).

In terms of assembly, part of an E3 ubiquitin-protein ligase complex with Elongin BC (ELOB and ELOC), RBX1 and CUL5. Component of a probable ECS(LRRC41) complex which contains CUL5, RNF7/RBX2, Elongin BC and LRRC41. Interacts with CUL5, RNF7, ELOB and ELOC.

It functions in the pathway protein modification; protein ubiquitination. Functionally, probable substrate recognition component of an ECS (Elongin BC-CUL2/5-SOCS-box protein) E3 ubiquitin ligase complex which mediates the ubiquitination and subsequent proteasomal degradation of target proteins. This chain is Leucine-rich repeat-containing protein 41 (LRRC41), found in Homo sapiens (Human).